A 605-amino-acid chain; its full sequence is Elongation factor 4 (605 aa).

In terms of domain architecture, tr-type G spans 11 to 193 (KNIRNFSIIA…TLVDVIPAPT (183 aa)). GTP is bound by residues 23–28 (DHGKST) and 140–143 (NKID).

It belongs to the TRAFAC class translation factor GTPase superfamily. Classic translation factor GTPase family. LepA subfamily.

It is found in the cell inner membrane. It catalyses the reaction GTP + H2O = GDP + phosphate + H(+). Functionally, required for accurate and efficient protein synthesis under certain stress conditions. May act as a fidelity factor of the translation reaction, by catalyzing a one-codon backward translocation of tRNAs on improperly translocated ribosomes. Back-translocation proceeds from a post-translocation (POST) complex to a pre-translocation (PRE) complex, thus giving elongation factor G a second chance to translocate the tRNAs correctly. Binds to ribosomes in a GTP-dependent manner. In Acinetobacter baumannii (strain SDF), this protein is Elongation factor 4.